Reading from the N-terminus, the 124-residue chain is Small ribosomal subunit protein uS12 (124 aa).

D89 carries the post-translational modification 3-methylthioaspartic acid.

This sequence belongs to the universal ribosomal protein uS12 family. In terms of assembly, part of the 30S ribosomal subunit. Contacts proteins S8 and S17. May interact with IF1 in the 30S initiation complex.

Its function is as follows. With S4 and S5 plays an important role in translational accuracy. Functionally, interacts with and stabilizes bases of the 16S rRNA that are involved in tRNA selection in the A site and with the mRNA backbone. Located at the interface of the 30S and 50S subunits, it traverses the body of the 30S subunit contacting proteins on the other side and probably holding the rRNA structure together. The combined cluster of proteins S8, S12 and S17 appears to hold together the shoulder and platform of the 30S subunit. The chain is Small ribosomal subunit protein uS12 from Hamiltonella defensa subsp. Acyrthosiphon pisum (strain 5AT).